The chain runs to 160 residues: MSPAAGVPEMPALDASGVRLGIVASTWHSRICDALLAGARKVAADSGVDNPTVVRVLGAIEIPVVAQELARNHDAVVALGVVIRGQTPHFEYVCDAVTQGITRVSLDASTPVANGVLTTDNEQQALDRAGLPESAEDKGSQAAGAALSAALTLRELRARS.

5-amino-6-(D-ribitylamino)uracil contacts are provided by residues tryptophan 27, 59 to 61, and 81 to 83; these read AIE and VVI. Residue 86-87 participates in (2S)-2-hydroxy-3-oxobutyl phosphate binding; sequence QT. Histidine 89 serves as the catalytic Proton donor. Position 114 (asparagine 114) interacts with 5-amino-6-(D-ribitylamino)uracil. Residue arginine 128 participates in (2S)-2-hydroxy-3-oxobutyl phosphate binding.

Belongs to the DMRL synthase family. Homopentamer.

The catalysed reaction is (2S)-2-hydroxy-3-oxobutyl phosphate + 5-amino-6-(D-ribitylamino)uracil = 6,7-dimethyl-8-(1-D-ribityl)lumazine + phosphate + 2 H2O + H(+). Its pathway is cofactor biosynthesis; riboflavin biosynthesis; riboflavin from 2-hydroxy-3-oxobutyl phosphate and 5-amino-6-(D-ribitylamino)uracil: step 1/2. Functionally, catalyzes the formation of 6,7-dimethyl-8-ribityllumazine by condensation of 5-amino-6-(D-ribitylamino)uracil with 3,4-dihydroxy-2-butanone 4-phosphate. This is the penultimate step in the biosynthesis of riboflavin. This chain is 6,7-dimethyl-8-ribityllumazine synthase, found in Mycolicibacterium paratuberculosis (strain ATCC BAA-968 / K-10) (Mycobacterium paratuberculosis).